We begin with the raw amino-acid sequence, 105 residues long: Large ribosomal subunit protein uL24 (105 aa).

The protein belongs to the universal ribosomal protein uL24 family. In terms of assembly, part of the 50S ribosomal subunit.

Its function is as follows. One of two assembly initiator proteins, it binds directly to the 5'-end of the 23S rRNA, where it nucleates assembly of the 50S subunit. One of the proteins that surrounds the polypeptide exit tunnel on the outside of the subunit. The chain is Large ribosomal subunit protein uL24 from Aeromonas hydrophila subsp. hydrophila (strain ATCC 7966 / DSM 30187 / BCRC 13018 / CCUG 14551 / JCM 1027 / KCTC 2358 / NCIMB 9240 / NCTC 8049).